A 1392-amino-acid chain; its full sequence is Leucine-rich PPR motif-containing protein, mitochondrial (1392 aa).

The transit peptide at 1–77 (MSALLRPARW…LPEEPAPVRR (77 aa)) directs the protein to the mitochondrion. PPR repeat units follow at residues 125-159 (LLRS…GTVY), 160-194 (DVSH…NIQP), 195-229 (NRVT…DLPI), 230-264 (TEAV…GIEP), 265-299 (GPDT…DHYF), 300-334 (MDRD…RRSI), 402-436 (HSSS…GFPI), 437-471 (RTHY…GVDP), 677-708 (VGDP…ESDM), 709-745 (VIGG…SAVL), 746-783 (DTAK…IKDA), 784-820 (AVLS…AKPS), 821-856 (SNIS…VLPR), and 953-987 (RDQM…NLIP). Residues Lys-151 and Lys-186 each carry the N6-acetyllysine modification. Lys-291 carries the N6-acetyllysine modification. Lys-462 carries the N6-acetyllysine modification. The residue at position 749 (Lys-749) is an N6-acetyllysine. A phosphoserine mark is found at Ser-1025, Ser-1026, and Ser-1028. PPR repeat units lie at residues 1030-1064 (GDTV…DVVF), 1065-1101 (SSEA…GFTL), 1102-1136 (NGAA…EQVP), 1137-1173 (SELA…IELS), 1174-1208 (RMVF…ENQT), and 1315-1349 (NDRV…NMKL). The residue at position 1137 (Ser-1137) is a Phosphoserine.

In terms of assembly, component of mRNP complexes associated with HNRPA1. Component of the complex, at least composed of LRPPRC, BECN1 and BCL2; the interactions prevent BECN1 from forming an autophagy-inducing complex with PIK3C3. Interacts with CECR2, HEBP2, MAP1S, UXT, PPARGC1A and FOXO1. Interacts (via N-terminus) with EIF4E; the interaction promotes association of EIF4E with 4ESE-containing mRNAs. Interacts with exportin XPO1/CRM1; interacts both alone and in complex with EIF4E and 4ESE-containing mRNAs to form an EIF4E-dependent mRNA export complex. Interacts with importin IPO8; the interaction occurs when LRPPRC is in its RNA-free form and returns LRPPRC to the nucleus for further export rounds. Interacts with BECN1. Widely expressed. Expressed in liver, brain and a subset of small diameter sensory neurons in the dorsal root ganglion (at protein level).

It localises to the mitochondrion. The protein localises to the nucleus. It is found in the nucleoplasm. Its subcellular location is the nucleus inner membrane. The protein resides in the nucleus outer membrane. Functionally, may play a role in RNA metabolism in both nuclei and mitochondria. In the nucleus binds to HNRPA1-associated poly(A) mRNAs and is part of nmRNP complexes at late stages of mRNA maturation which are possibly associated with nuclear mRNA export. Positively modulates nuclear export of mRNAs containing the EIF4E sensitivity element (4ESE) by binding simultaneously to both EIF4E and the 4ESE and acting as a platform for assembly for the RNA export complex. Also binds to exportin XPO1/CRM1 to engage the nuclear pore and traffic the bound mRNAs to the cytoplasm. May bind mature mRNA in the nucleus outer membrane. In mitochondria binds to poly(A) mRNA. Plays a role in translation or stability of mitochondrially encoded cytochrome c oxidase (COX) subunits. May be involved in transcription regulation. Cooperates with PPARGC1A to regulate certain mitochondrially encoded genes and gluconeogenic genes and may regulate docking of PPARGC1A to transcription factors. Seems to be involved in the transcription regulation of the multidrug-related genes MDR1 and MVP. Part of a nuclear factor that binds to the invMED1 element of MDR1 and MVP gene promoters. Binds single-stranded DNA. Required for maintaining mitochondrial potential. Suppresses the initiation of basal levels of autophagy and mitophagy by sustaining BCL2 levels. This is Leucine-rich PPR motif-containing protein, mitochondrial (Lrpprc) from Rattus norvegicus (Rat).